The sequence spans 427 residues: Trigger factor (427 aa).

The 86-residue stretch at 163–248 (GDTVVIDFVG…IHEVKAKEVP (86 aa)) folds into the PPIase FKBP-type domain.

This sequence belongs to the FKBP-type PPIase family. Tig subfamily.

Its subcellular location is the cytoplasm. The catalysed reaction is [protein]-peptidylproline (omega=180) = [protein]-peptidylproline (omega=0). In terms of biological role, involved in protein export. Acts as a chaperone by maintaining the newly synthesized protein in an open conformation. Functions as a peptidyl-prolyl cis-trans isomerase. This chain is Trigger factor, found in Streptococcus pneumoniae (strain CGSP14).